We begin with the raw amino-acid sequence, 425 residues long: G protein-activated inward rectifier potassium channel 2 (425 aa).

The Cytoplasmic segment spans residues 1–91 (MTMAKLTESM…IFTTLVDLKW (91 aa)). A phosphoserine mark is found at Ser18 and Ser25. A helical transmembrane segment spans residues 92-116 (RFNLLIFVMVYTVTWLFFGMIWWLI). At 117 to 140 (AYIRGDMDHIEDPSWTPCVTNLNG) the chain is on the extracellular side. Positions 141–152 (FVSAFLFSIETE) form an intramembrane region, helical; Pore-forming. The segment at residues 153-159 (TTIGYGY) is an intramembrane region (pore-forming). Positions 154–159 (TIGYGY) match the Selectivity filter motif. Residues 160-168 (RVITDKCPE) lie on the Extracellular side of the membrane. The helical transmembrane segment at 169–190 (GIILLLIQSVLGSIVNAFMVGC) threads the bilayer. Topologically, residues 191–425 (MFVKISQPKK…VANLENESKV (235 aa)) are cytoplasmic. Positions 392 to 425 (NQHAELETEEEEKNPEELTERNGDVANLENESKV) are disordered. Residues 422–425 (ESKV) carry the PDZ-binding motif.

This sequence belongs to the inward rectifier-type potassium channel (TC 1.A.2.1) family. KCNJ6 subfamily. In terms of assembly, associates with KCNJ3/GIRK1 or KCNJ5/GRIK4 to form a G-protein-activated heteromultimer pore-forming unit. The resulting inward current is much larger. Interacts (via PDZ-binding motif) with SNX27 (via PDZ domain); the interaction is required for recycling to the plasma membrane when endocytosed and prevent degradation in lysosomes. In terms of tissue distribution, pancreatic beta cells and brain.

It is found in the membrane. The enzyme catalyses K(+)(in) = K(+)(out). Activated by phosphatidylinositol 4,5 biphosphate (PtdIns(4,5)P2). Functionally, inward rectifier potassium channels are characterized by a greater tendency to allow potassium to flow into the cell rather than out of it. Their voltage dependence is regulated by the concentration of extracellular potassium; as external potassium is raised, the voltage range of the channel opening shifts to more positive voltages. The inward rectification is mainly due to the blockage of outward current by internal magnesium. This potassium channel may be involved in the regulation of insulin secretion by glucose and/or neurotransmitters acting through G-protein-coupled receptors. This is G protein-activated inward rectifier potassium channel 2 (Kcnj6) from Rattus norvegicus (Rat).